Consider the following 181-residue polypeptide: Adenine phosphoribosyltransferase (181 aa).

Belongs to the purine/pyrimidine phosphoribosyltransferase family. As to quaternary structure, homodimer.

It is found in the cytoplasm. The catalysed reaction is AMP + diphosphate = 5-phospho-alpha-D-ribose 1-diphosphate + adenine. The protein operates within purine metabolism; AMP biosynthesis via salvage pathway; AMP from adenine: step 1/1. Catalyzes a salvage reaction resulting in the formation of AMP, that is energically less costly than de novo synthesis. This chain is Adenine phosphoribosyltransferase, found in Aliivibrio salmonicida (strain LFI1238) (Vibrio salmonicida (strain LFI1238)).